The chain runs to 280 residues: Dual adapter for phosphotyrosine and 3-phosphotyrosine and 3-phosphoinositide (280 aa).

The SH2 domain maps to 35 to 129 (WYHGNLTRHA…GTLMVLKHPY (95 aa)). Tyrosine 139 carries the post-translational modification Phosphotyrosine. At serine 141 the chain carries Phosphoserine. The PH domain maps to 164–259 (LGTKEGYLTK…WIKILRWKLS (96 aa)).

In terms of assembly, interacts with PtdIns(3,4,5)P3 and PLCG2. Phosphorylated on tyrosine residues.

The protein resides in the cytoplasm. It is found in the membrane. In terms of biological role, may act as a B-cell-associated adapter that regulates B-cell antigen receptor (BCR)-signaling downstream of PI3K. In Mus musculus (Mouse), this protein is Dual adapter for phosphotyrosine and 3-phosphotyrosine and 3-phosphoinositide (Dapp1).